Here is a 278-residue protein sequence, read N- to C-terminus: 3-oxoacyl-[acyl-carrier-protein] reductase (278 aa).

NADP(+) is bound by residues T13, R14, I16, S36, S40, T44, D66, F67, E77, G122, Q125, and E126. The active-site Proton donor is the S182. Residues Y198, K202, L230, and V231 each coordinate NADP(+). Residue Y198 is the Proton acceptor of the active site. K202 acts as the Lowers pKa of active site Tyr in catalysis.

It belongs to the short-chain dehydrogenases/reductases (SDR) family.

Its subcellular location is the mitochondrion. It catalyses the reaction a (3R)-hydroxyacyl-[ACP] + NADP(+) = a 3-oxoacyl-[ACP] + NADPH + H(+). It functions in the pathway lipid metabolism; fatty acid biosynthesis. In terms of biological role, involved in biosynthesis of fatty acids in mitochondria. This Saccharomyces cerevisiae (strain ATCC 204508 / S288c) (Baker's yeast) protein is 3-oxoacyl-[acyl-carrier-protein] reductase (OAR1).